We begin with the raw amino-acid sequence, 319 residues long: Methionyl-tRNA formyltransferase (319 aa).

A (6S)-5,6,7,8-tetrahydrofolate-binding site is contributed by 115 to 118 (SLLP).

This sequence belongs to the Fmt family.

The enzyme catalyses L-methionyl-tRNA(fMet) + (6R)-10-formyltetrahydrofolate = N-formyl-L-methionyl-tRNA(fMet) + (6S)-5,6,7,8-tetrahydrofolate + H(+). Attaches a formyl group to the free amino group of methionyl-tRNA(fMet). The formyl group appears to play a dual role in the initiator identity of N-formylmethionyl-tRNA by promoting its recognition by IF2 and preventing the misappropriation of this tRNA by the elongation apparatus. This chain is Methionyl-tRNA formyltransferase, found in Lactococcus lactis subsp. lactis (strain IL1403) (Streptococcus lactis).